The chain runs to 1238 residues: DNA-directed RNA polymerase subunit beta (1238 aa).

The tract at residues 1187 to 1238 (EGREDTPPEEVYEESYEEGFEEEIEELPEDIDFEPDSFDIENDDLDLEDFDI) is disordered. Residues 1193 to 1238 (PPEEVYEESYEEGFEEEIEELPEDIDFEPDSFDIENDDLDLEDFDI) are compositionally biased toward acidic residues.

Belongs to the RNA polymerase beta chain family. The RNAP catalytic core consists of 2 alpha, 1 beta, 1 beta' and 1 omega subunit. When a sigma factor is associated with the core the holoenzyme is formed, which can initiate transcription.

The catalysed reaction is RNA(n) + a ribonucleoside 5'-triphosphate = RNA(n+1) + diphosphate. Functionally, DNA-dependent RNA polymerase catalyzes the transcription of DNA into RNA using the four ribonucleoside triphosphates as substrates. The polypeptide is DNA-directed RNA polymerase subunit beta (Thermoanaerobacter pseudethanolicus (strain ATCC 33223 / 39E) (Clostridium thermohydrosulfuricum)).